A 163-amino-acid polypeptide reads, in one-letter code: NADH-quinone oxidoreductase subunit I (163 aa).

2 consecutive 4Fe-4S ferredoxin-type domains span residues 53–83 (LRRYPNGEERCIACKLCEAICPAQAITIEAG) and 94–123 (VRYDIDMVKCIYCGFCQEACPVDAIVEGPN). The [4Fe-4S] cluster site is built by cysteine 63, cysteine 66, cysteine 69, cysteine 73, cysteine 103, cysteine 106, cysteine 109, and cysteine 113.

This sequence belongs to the complex I 23 kDa subunit family. As to quaternary structure, NDH-1 is composed of 14 different subunits. Subunits NuoA, H, J, K, L, M, N constitute the membrane sector of the complex. The cofactor is [4Fe-4S] cluster.

The protein resides in the cell inner membrane. The catalysed reaction is a quinone + NADH + 5 H(+)(in) = a quinol + NAD(+) + 4 H(+)(out). In terms of biological role, NDH-1 shuttles electrons from NADH, via FMN and iron-sulfur (Fe-S) centers, to quinones in the respiratory chain. The immediate electron acceptor for the enzyme in this species is believed to be ubiquinone. Couples the redox reaction to proton translocation (for every two electrons transferred, four hydrogen ions are translocated across the cytoplasmic membrane), and thus conserves the redox energy in a proton gradient. This Allorhizobium ampelinum (strain ATCC BAA-846 / DSM 112012 / S4) (Agrobacterium vitis (strain S4)) protein is NADH-quinone oxidoreductase subunit I.